The sequence spans 425 residues: Tryptophan synthase beta chain (425 aa).

Residue lysine 107 is modified to N6-(pyridoxal phosphate)lysine.

Belongs to the TrpB family. As to quaternary structure, tetramer of two alpha and two beta chains. The cofactor is pyridoxal 5'-phosphate.

The enzyme catalyses (1S,2R)-1-C-(indol-3-yl)glycerol 3-phosphate + L-serine = D-glyceraldehyde 3-phosphate + L-tryptophan + H2O. It functions in the pathway amino-acid biosynthesis; L-tryptophan biosynthesis; L-tryptophan from chorismate: step 5/5. Its function is as follows. The beta subunit is responsible for the synthesis of L-tryptophan from indole and L-serine. The polypeptide is Tryptophan synthase beta chain (Synechococcus sp. (strain JA-2-3B'a(2-13)) (Cyanobacteria bacterium Yellowstone B-Prime)).